Here is a 69-residue protein sequence, read N- to C-terminus: Large ribosomal subunit protein uL29 (69 aa).

This sequence belongs to the universal ribosomal protein uL29 family.

In Synechococcus sp. (strain WH7803), this protein is Large ribosomal subunit protein uL29.